A 1386-amino-acid chain; its full sequence is Roundabout homolog 3 (1386 aa).

Positions 1 to 20 (MLRYLLKTLLQMNLFADSLA) are cleaved as a signal peptide. Residues 21 to 891 (GDISNSSELL…VRLARVLREP (871 aa)) are Extracellular-facing. 4 N-linked (GlcNAc...) asparagine glycosylation sites follow: Asn-25, Asn-34, Asn-41, and Asn-53. 5 consecutive Ig-like C2-type domains span residues 64–160 (PRIV…ASLE), 166–253 (DDFR…AEVM), 258–342 (PSFL…GSLS), 347–440 (PQLV…ALLE), and 450–531 (PPVI…GEAT). Residues Cys-85 and Cys-143 are joined by a disulfide bond. An N-linked (GlcNAc...) asparagine glycan is attached at Asn-156. Intrachain disulfides connect Cys-187–Cys-236, Cys-279–Cys-326, and Cys-368–Cys-424. 3 N-linked (GlcNAc...) asparagine glycosylation sites follow: Asn-410, Asn-459, and Asn-503. A disulfide bond links Cys-472 and Cys-521. Disordered stretches follow at residues 541–563 (DWGV…SQPV) and 639–662 (EPSP…EDPW). Over residues 546–559 (PDPPTEPSSPPGAP) the composition is skewed to pro residues. Fibronectin type-III domains lie at 558 to 652 (APSQ…TQDS), 671 to 766 (VAVR…IPEE), and 771 to 869 (PPQG…SPPD). Residues Asn-784, Asn-813, and Asn-820 are each glycosylated (N-linked (GlcNAc...) asparagine). A helical membrane pass occupies residues 892–912 (AFLAGSGAACGALLLGLCAAL). Over 913–1386 (YWRRKQRKEL…PGQKRREEPR (474 aa)) the chain is Cytoplasmic. 3 disordered regions span residues 965–989 (SWPH…NPDP), 1028–1310 (ELQT…AVPL), and 1327–1386 (SRPS…EEPR). Residues 1067-1083 (VKLLGKPVQMPSLNWPE) are compositionally biased toward low complexity. The segment covering 1099-1112 (GPEEELEGSSEPEE) has biased composition (acidic residues). Residues 1158–1169 (PSPPDPPQPPTD) show a composition bias toward pro residues. 2 stretches are compositionally biased toward low complexity: residues 1178-1191 (RRVP…LSVS) and 1202-1229 (PAGL…SAPG). Position 1263 is a phosphoserine (Ser-1263). Over residues 1294–1304 (LERERSGERKA) the composition is skewed to basic and acidic residues. Residues 1333–1344 (SRGQGTSTCSTA) are compositionally biased toward polar residues. Low complexity predominate over residues 1345 to 1361 (GSNSSRGSSSSRGSRGP).

This sequence belongs to the immunoglobulin superfamily. ROBO family. Monomer. Interacts (via Fibronectin type-III 1 domain) with NELL2 (via the EGF domains) with a 3:3 stoichiometry; this interaction promotes oligomerization of ROBO3 resulting in the repulsion of commissural axons in the midline.

Its subcellular location is the membrane. Its function is as follows. Receptor involved in axon guidance during development. Acts as a multifunctional regulator of pathfinding that simultaneously mediates NELL2 repulsion, inhibits SLIT repulsion, and facilitates Netrin-1/NTN1 attraction. In spinal cord development plays a role in guiding commissural axons probably by preventing premature sensitivity to Slit proteins thus inhibiting Slit signaling through ROBO1/ROBO2. Binding OF NELL2 to the receptor ROBO3 promotes oligomerization of ROBO3, resulting in the repulsion of commissural axons in the midline. ROBO3 also indirectly boosts axon attraction to NTN1 without interacting with NTN1 itself. The polypeptide is Roundabout homolog 3 (Homo sapiens (Human)).